Here is a 203-residue protein sequence, read N- to C-terminus: Coupling of ubiquitin conjugation to ER degradation protein 1 (203 aa).

Residues 1 to 6 (MEDSRL) lie on the Lumenal side of the membrane. Residues 7-23 (LITLILVFGVIFLKKFF) form a helical membrane-spanning segment. The Cytoplasmic portion of the chain corresponds to 24–203 (QSNQHPSAQR…SDKDLQSLLT (180 aa)). The interval 36 to 61 (ATGVNAHGRPQGSTQNALRRTGRVNG) is disordered. The CUE domain occupies 65–107 (VTTQMVETVQNLAPNLHPEQIRYSLENTGSVEETVERYLRGDE).

The protein belongs to the CUE1 family. In terms of assembly, forms a heterodimer with UBC7. Interacts with SSM4/DOA10 and UBX2/SEL1.

The protein localises to the endoplasmic reticulum membrane. In terms of biological role, component of the endoplasmic reticulum-associated protein degradation (ERAD) pathway. Recruits the soluble ubiquitin-conjugating enzyme UBC7 to the cytoplasmic face of the endoplasmic reticulum membrane where it functions in degradation of misfolded or regulated proteins localized in the endoplasmic reticulum (ER) lumen or membrane via the ubiquitin-proteasome system. Targets the E2 conjugating enzyme UBC7 to the DOA10 ubiquitin ligase complex, which is part of the ERAD-C pathway responsible for the rapid degradation of membrane proteins with misfolded cytoplasmic domains, and to the HRD1 ubiquitin ligase complex, which is part of the ERAD-L and ERAD-M pathways responsible for the rapid degradation of soluble lumenal and membrane proteins with misfolded lumenal domains (ERAD-L), or ER-membrane proteins with misfolded transmembrane domains (ERAD-M). Also has a role in cold adaptation, perhaps through effects on sterol biosynthesis. The sequence is that of Coupling of ubiquitin conjugation to ER degradation protein 1 (CUE1) from Saccharomyces cerevisiae (strain ATCC 204508 / S288c) (Baker's yeast).